Reading from the N-terminus, the 103-residue chain is MKNPLLRPWLTEKSTGLTEDRGQYVFQVKLDADKIDIKMAVEEKFGVDVKSVRTLNSLGKTRRQNTRKGLVTGKKNDTKKAIVTLGEGQTIDFYSGANPKGDA.

The protein belongs to the universal ribosomal protein uL23 family. Part of the 50S ribosomal subunit. Contacts protein L29, and trigger factor when it is bound to the ribosome.

Its function is as follows. One of the early assembly proteins it binds 23S rRNA. One of the proteins that surrounds the polypeptide exit tunnel on the outside of the ribosome. Forms the main docking site for trigger factor binding to the ribosome. The polypeptide is Large ribosomal subunit protein uL23 (Chlorobium phaeovibrioides (strain DSM 265 / 1930) (Prosthecochloris vibrioformis (strain DSM 265))).